The primary structure comprises 373 residues: DNA replication and repair protein RecF (373 aa).

An ATP-binding site is contributed by 30–37; it reads GDNAQGKT.

The protein belongs to the RecF family.

It localises to the cytoplasm. Functionally, the RecF protein is involved in DNA metabolism; it is required for DNA replication and normal SOS inducibility. RecF binds preferentially to single-stranded, linear DNA. It also seems to bind ATP. This Oenococcus oeni (strain ATCC BAA-331 / PSU-1) protein is DNA replication and repair protein RecF.